A 549-amino-acid chain; its full sequence is MGMFCNQCEQAAKGVGCDIIGVCGKNPEVAALQDLMLYGLKGLAIYADKARELGVKEEKIDYFVLEGLFTTVTNVDFDPVQIAGKLRTCYDYKERIKALYETAYREKNGSSAPQITAGPAAWVIAGDLEGLVKQGQEHGINTHHADADIRSAIEILIYGLKGMAAYADHAYILGKKDEEVFAFFHKAMAATADPAKGLMDFVGLAMECGKLNIKVMGMLNEGHVAHYGHPVPTKVPTGTRKNKGILVSGHDLRMLEELLKQTDGKGIDVYPHGEMLPAHGYPGLKKYAHLYGNFGGAWQDQAKEFPHFPGAIIFNTNCIQRPADSYKDRLFSWGQVGWPGVKHINGWDFSEVINKALECPELADAPAKEILTGFGHNAVLGVADKVIEGVKAGAIKHFFLIGGCDGAKPGRNYYTELAEKVPQDCVILTLACGKYRFNKLEFGDIGGIPRLLDIGQCNDAYSALQIALALADAFKCGVNDLPLSMILSWYEQKAVVILLSLLHLGIKNIKIGPSLPAFVTPNVLNFLVENFNLGPITTVDADLKAALGQ.

C5, C8, C17, and C23 together coordinate [4Fe-4S] cluster. The hybrid [4Fe-2O-2S] cluster site is built by H250, E274, C318, C404, C432, C457, E491, and K493. At C404 the chain carries Cysteine persulfide.

Belongs to the HCP family. [4Fe-4S] cluster is required as a cofactor. Requires hybrid [4Fe-2O-2S] cluster as cofactor.

It localises to the cytoplasm. The catalysed reaction is A + NH4(+) + H2O = hydroxylamine + AH2 + H(+). Catalyzes the reduction of hydroxylamine to form NH(3) and H(2)O. The sequence is that of Hydroxylamine reductase from Geobacter metallireducens (strain ATCC 53774 / DSM 7210 / GS-15).